Reading from the N-terminus, the 428-residue chain is L-rhamnonate dehydratase (428 aa).

The substrate site is built by His-56 and Arg-82. Residues Asp-249, Glu-275, and Glu-303 each contribute to the Mg(2+) site. His-352 (proton acceptor) is an active-site residue. Glu-372 serves as a coordination point for substrate.

The protein belongs to the mandelate racemase/muconate lactonizing enzyme family. RhamD subfamily. In terms of assembly, homooctamer; tetramer of dimers. Requires Mg(2+) as cofactor.

The catalysed reaction is L-rhamnonate = 2-dehydro-3-deoxy-L-rhamnonate + H2O. Catalyzes the dehydration of L-rhamnonate to 2-keto-3-deoxy-L-rhamnonate (KDR). This chain is L-rhamnonate dehydratase, found in Shigella sonnei (strain Ss046).